The chain runs to 690 residues: Secreted LysM effector Vd5LysM (690 aa).

Residues N4 and N69 are each glycosylated (N-linked (GlcNAc...) asparagine). LysM domains are found at residues 203–248 (TQYT…SLCI), 253–301 (DTVT…TLCI), and 341–387 (RWYN…SYCV). N260, N295, N375, N410, N423, and N492 each carry an N-linked (GlcNAc...) asparagine glycan. The segment at 523-546 (PATATTGDGGPTPPAPTHSGQPQD) is disordered. Residues 549-596 (TWHVVSSGDSCQSVADDAGISRDQFHDWNPAVGRDCSTNFWLGQAYCV) enclose the LysM 4 domain. Residues 606–619 (STVASSTTSSVTPG) show a composition bias toward low complexity. Positions 606 to 636 (STVASSTTSSVTPGPSKPEPPGPTHTGQPSD) are disordered. One can recognise a LysM 5 domain in the interval 639-686 (EWDVVETGDTCGSLAESNDISLSQFFDWNPAVSRDCVANFWIGQAYCI).

This sequence belongs to the secreted LysM effector family.

Functionally, might have a role in sequestration of chitin oligosaccharides (breakdown products of fungal cell walls that are released during invasion and act as triggers of host immunity) to dampen host defense. Does not play an important role during host colonization. This Verticillium dahliae (strain VdLs.17 / ATCC MYA-4575 / FGSC 10137) (Verticillium wilt) protein is Secreted LysM effector Vd5LysM.